A 734-amino-acid chain; its full sequence is Photosystem I P700 chlorophyll a apoprotein A2 (734 aa).

Transmembrane regions (helical) follow at residues 46–69 (IFAS…FHVA), 135–158 (LYTG…LHLQ), 175–199 (LNHH…HVAI), 273–291 (IAHH…GHMY), 330–353 (LHFQ…QHIY), 369–395 (AALY…IFFI), 417–439 (AIIS…LYVH), and 517–535 (FLVH…LILV). [4Fe-4S] cluster-binding residues include Cys-559 and Cys-568. The next 2 membrane-spanning stretches (helical) occupy residues 575 to 596 (AFYL…YWHW) and 643 to 665 (LSVW…MFLI). Chlorophyll a contacts are provided by His-654, Met-662, and Tyr-670. Trp-671 is a phylloquinone binding site. A helical membrane pass occupies residues 707–727 (LVGLAHFSVGYIFTYAAFLIA).

The protein belongs to the PsaA/PsaB family. In terms of assembly, the PsaA/B heterodimer binds the P700 chlorophyll special pair and subsequent electron acceptors. PSI consists of a core antenna complex that captures photons, and an electron transfer chain that converts photonic excitation into a charge separation. The eukaryotic PSI reaction center is composed of at least 11 subunits. P700 is a chlorophyll a/chlorophyll a' dimer, A0 is one or more chlorophyll a, A1 is one or both phylloquinones and FX is a shared 4Fe-4S iron-sulfur center. serves as cofactor.

The protein localises to the plastid. It localises to the chloroplast thylakoid membrane. It carries out the reaction reduced [plastocyanin] + hnu + oxidized [2Fe-2S]-[ferredoxin] = oxidized [plastocyanin] + reduced [2Fe-2S]-[ferredoxin]. Functionally, psaA and PsaB bind P700, the primary electron donor of photosystem I (PSI), as well as the electron acceptors A0, A1 and FX. PSI is a plastocyanin-ferredoxin oxidoreductase, converting photonic excitation into a charge separation, which transfers an electron from the donor P700 chlorophyll pair to the spectroscopically characterized acceptors A0, A1, FX, FA and FB in turn. Oxidized P700 is reduced on the lumenal side of the thylakoid membrane by plastocyanin. This is Photosystem I P700 chlorophyll a apoprotein A2 from Staurastrum punctulatum (Green alga).